A 311-amino-acid polypeptide reads, in one-letter code: MPDAIEFEHEGRRNPNSAEAESAYSSIIAALDLQESDYAVISGHSRIVGAAALVYPDADAETLLAASLWTACLIVNDDRWDYVQEDGGRLAPGEWFDGVTEVVDTWRTAGPRLPDPFFELVRTTMSRLDAALGAEAADEIGHEIKRAITAMKWEGVWNEYTKKTSLATYLSFRRGYCTMDVQVVLDKWINGGRSFAALRDDPVRRAIDDVVVRFGCLSNDYYSWGREKKAVDKSNAVRILMDHAGYDESTALAHVRDDCVQAITDLDCIEESIKRSGHLGSHAQELLDYLACHRPLIYAAATWPTETNRYR.

The DDXXD motif motif lies at 77–81 (DDRWD).

The protein belongs to the terpene synthase family. In terms of assembly, homodimer. The cofactor is Mg(2+).

It carries out the reaction terpentedienyl diphosphate = terpentetriene + diphosphate. Its pathway is antibiotic biosynthesis. Its function is as follows. Involved in the production of the isoprenoid antibiotic terpentecin. Converts terpentedienol diphosphate (TDP) into terpentetriene (TTE). Can also accept geranylgeranyl diphosphate (GGDP) and farnesyl diphosphate (FDP) as substrates. In Kitasatospora griseola (Streptomyces griseolosporeus), this protein is Terpentetriene synthase (cyc2).